We begin with the raw amino-acid sequence, 223 residues long: Translation initiation factor 6 (223 aa).

It belongs to the eIF-6 family.

In terms of biological role, binds to the 50S ribosomal subunit and prevents its association with the 30S ribosomal subunit to form the 70S initiation complex. This chain is Translation initiation factor 6, found in Saccharolobus islandicus (strain Y.N.15.51 / Yellowstone #2) (Sulfolobus islandicus).